Consider the following 507-residue polypeptide: ATP synthase subunit alpha, chloroplastic (507 aa).

ATP is bound at residue 170-177 (GDRQTGKT). T257 is modified (phosphothreonine).

Belongs to the ATPase alpha/beta chains family. As to quaternary structure, F-type ATPases have 2 components, CF(1) - the catalytic core - and CF(0) - the membrane proton channel. CF(1) has five subunits: alpha(3), beta(3), gamma(1), delta(1), epsilon(1). CF(0) has four main subunits: a, b, b' and c.

The protein localises to the plastid. It is found in the chloroplast thylakoid membrane. It catalyses the reaction ATP + H2O + 4 H(+)(in) = ADP + phosphate + 5 H(+)(out). Functionally, produces ATP from ADP in the presence of a proton gradient across the membrane. The alpha chain is a regulatory subunit. In Aethionema grandiflorum (Persian stone-cress), this protein is ATP synthase subunit alpha, chloroplastic.